The following is a 789-amino-acid chain: Alpha-glucosidase 2 (789 aa).

2 disordered regions span residues 1 to 24 and 512 to 531; these read MTGL…PRVI and ELNP…ASHP. Catalysis depends on aspartate 523, which acts as the Proton donor. Glutamate 756 functions as the Proton acceptor in the catalytic mechanism.

The protein belongs to the glycosyl hydrolase 63 family.

It participates in glycan metabolism; N-glycan degradation. The sequence is that of Alpha-glucosidase 2 (GCS2) from Arabidopsis thaliana (Mouse-ear cress).